The chain runs to 270 residues: Inositol monophosphatase (270 aa).

Mg(2+) is bound by residues Glu-71, Asp-91, Leu-93, and Asp-94. Glu-71 lines the substrate pocket. Substrate is bound by residues 93–96 (LDGT), 194–196 (GSC), Glu-213, and Asp-221. Position 221 (Asp-221) interacts with Mg(2+).

This sequence belongs to the inositol monophosphatase superfamily. It depends on Mg(2+) as a cofactor.

The catalysed reaction is a myo-inositol phosphate + H2O = myo-inositol + phosphate. Its pathway is polyol metabolism; myo-inositol biosynthesis; myo-inositol from D-glucose 6-phosphate: step 2/2. Its activity is regulated as follows. Inhibited by Li(+). In terms of biological role, responsible for the provision of inositol required for synthesis of phosphatidylinositol and polyphosphoinositides. In Mesembryanthemum crystallinum (Common ice plant), this protein is Inositol monophosphatase (IMP1).